The following is a 90-amino-acid chain: Acylphosphatase (90 aa).

Residues 5-90 form the Acylphosphatase-like domain; it reads CERFIVKGHV…YKPFRGFKIL (86 aa). Active-site residues include R20 and N38.

Belongs to the acylphosphatase family.

The enzyme catalyses an acyl phosphate + H2O = a carboxylate + phosphate + H(+). This chain is Acylphosphatase (acyP), found in Vibrio parahaemolyticus serotype O3:K6 (strain RIMD 2210633).